The primary structure comprises 203 residues: Small ribosomal subunit protein uS4 (203 aa).

Positions 93-155 (RRLDSIVYRL…SKNLQQIRDA (63 aa)) constitute an S4 RNA-binding domain.

Belongs to the universal ribosomal protein uS4 family. In terms of assembly, part of the 30S ribosomal subunit. Contacts protein S5. The interaction surface between S4 and S5 is involved in control of translational fidelity.

In terms of biological role, one of the primary rRNA binding proteins, it binds directly to 16S rRNA where it nucleates assembly of the body of the 30S subunit. Its function is as follows. With S5 and S12 plays an important role in translational accuracy. This is Small ribosomal subunit protein uS4 from Lactobacillus acidophilus (strain ATCC 700396 / NCK56 / N2 / NCFM).